Reading from the N-terminus, the 97-residue chain is Putative pterin-4-alpha-carbinolamine dehydratase (97 aa).

The protein belongs to the pterin-4-alpha-carbinolamine dehydratase family.

It carries out the reaction (4aS,6R)-4a-hydroxy-L-erythro-5,6,7,8-tetrahydrobiopterin = (6R)-L-erythro-6,7-dihydrobiopterin + H2O. In Christiangramia forsetii (strain DSM 17595 / CGMCC 1.15422 / KT0803) (Gramella forsetii), this protein is Putative pterin-4-alpha-carbinolamine dehydratase.